Consider the following 444-residue polypeptide: Alpha-N-acetylgalactosaminidase (444 aa).

Residues 30 to 31 (LR), Asp-52, Asn-80, 101 to 104 (WEWH), His-107, 121 to 122 (EV), and Asn-150 each bind NAD(+). Tyr-179 contacts substrate. 208–212 (SEAKW) provides a ligand contact to NAD(+). Residues Arg-213, 225–228 (YPTH), and Tyr-307 each bind substrate. NAD(+) is bound at residue Tyr-225.

Belongs to the Gfo/Idh/MocA family. Glycosyl hydrolase 109 subfamily. The cofactor is NAD(+).

It catalyses the reaction Cleavage of non-reducing alpha-(1-&gt;3)-N-acetylgalactosamine residues from human blood group A and AB mucin glycoproteins, Forssman hapten and blood group A lacto series glycolipids.. Glycosidase that has specific alpha-N-acetylgalactosaminidase activity. The protein is Alpha-N-acetylgalactosaminidase (nagA) of Elizabethkingia meningoseptica (Chryseobacterium meningosepticum).